The following is a 104-amino-acid chain: Integration host factor subunit beta (104 aa).

This sequence belongs to the bacterial histone-like protein family. Heterodimer of an alpha and a beta chain.

Its function is as follows. This protein is one of the two subunits of integration host factor, a specific DNA-binding protein that functions in genetic recombination as well as in transcriptional and translational control. The protein is Integration host factor subunit beta (ihfB) of Xylella fastidiosa (strain 9a5c).